The primary structure comprises 718 residues: F-box/LRR-repeat protein 18 (718 aa).

The 48-residue stretch at 25–72 (GVHLLGFSDEILLHILSHVPSTDLILNVRRTCRKLAALCLDKSLIHTV) folds into the F-box domain. LRR repeat units follow at residues 77–103 (DYQASEDKVRQLVKEIGREIQQLSMAG), 104–128 (CYWLPGSTVEHVARCRSLVKVNLSG), 129–153 (CHLTSLRLSKMLSALQHLRSLAIDV), 177–201 (KQTLFTPSYGVVPCCTSLEKLLLYF), 324–352 (CTLSGGHLIQQVINGGKDLRSLASLNLSG), 367–392 (EDDIDSSILETLVASCCNLRHLNLSA), 393–422 (AHHHSSEGLGRHLCQLLARLRHLRSLSLPV), 468–492 (CPQPSSVFWSLLKNLPFLEHLELIG), 516–540 (AQSVGDSEVAAIGQLAFLRHLTLAQ), 542–567 (PSVLTGSGLVNIGLQCQQLRSLSLAN), 572–597 (GKVVYMPALSDMLKHCKRLRDLRLEQ), and 599–623 (YFSANAQFFQALSQCPSLQRLCLVS).

As to quaternary structure, directly interacts with SKP1 and CUL1.

In terms of biological role, substrate-recognition component of the SCF (SKP1-CUL1-F-box protein)-type E3 ubiquitin ligase complex. This is F-box/LRR-repeat protein 18 (FBXL18) from Homo sapiens (Human).